The following is a 485-amino-acid chain: DNA polymerase subunit gamma-2 (485 aa).

The tract at residues 28–65 (GQPELLTERSSPKGGHVKSHAELEGNGEHPEAPGSGEG) is disordered. The residue at position 38 (Ser-38) is a Phosphoserine. Basic and acidic residues predominate over residues 46-58 (SHAELEGNGEHPE).

Heterotrimer composed of a catalytic subunit and a homodimer of accessory subunits (POLG:POLG2).

It localises to the mitochondrion. It is found in the mitochondrion matrix. The protein resides in the mitochondrion nucleoid. Its function is as follows. Accessory subunit of DNA polymerase gamma solely responsible for replication of mitochondrial DNA (mtDNA). Acts as an allosteric regulator of the holoenzyme activities. Enhances the polymerase activity and the processivity of POLG by increasing its interactions with the DNA template. Suppresses POLG exonucleolytic proofreading especially toward homopolymeric templates bearing mismatched termini. Binds to single-stranded DNA. This Homo sapiens (Human) protein is DNA polymerase subunit gamma-2.